Reading from the N-terminus, the 158-residue chain is Endoribonuclease YbeY (158 aa).

Positions 114, 118, and 124 each coordinate Zn(2+).

This sequence belongs to the endoribonuclease YbeY family. It depends on Zn(2+) as a cofactor.

It is found in the cytoplasm. Functionally, single strand-specific metallo-endoribonuclease involved in late-stage 70S ribosome quality control and in maturation of the 3' terminus of the 16S rRNA. This chain is Endoribonuclease YbeY, found in Legionella pneumophila (strain Paris).